A 1363-amino-acid polypeptide reads, in one-letter code: DNA-directed RNA polymerase subunit beta (1363 aa).

It belongs to the RNA polymerase beta chain family. In terms of assembly, the RNAP catalytic core consists of 2 alpha, 1 beta, 1 beta' and 1 omega subunit. When a sigma factor is associated with the core the holoenzyme is formed, which can initiate transcription.

The catalysed reaction is RNA(n) + a ribonucleoside 5'-triphosphate = RNA(n+1) + diphosphate. DNA-dependent RNA polymerase catalyzes the transcription of DNA into RNA using the four ribonucleoside triphosphates as substrates. The chain is DNA-directed RNA polymerase subunit beta from Neorickettsia risticii (Ehrlichia risticii).